The primary structure comprises 83 residues: RNA-binding protein Hfq (83 aa).

A Sm domain is found at 10–70 (DTFLNQVRKE…ISTVMPLRPI (61 aa)).

The protein belongs to the Hfq family. As to quaternary structure, homohexamer.

RNA chaperone that binds small regulatory RNA (sRNAs) and mRNAs to facilitate mRNA translational regulation in response to envelope stress, environmental stress and changes in metabolite concentrations. Also binds with high specificity to tRNAs. The sequence is that of RNA-binding protein Hfq from Desulfitobacterium hafniense (strain DSM 10664 / DCB-2).